Here is a 276-residue protein sequence, read N- to C-terminus: Rhomboid protease GlpG (276 aa).

6 consecutive transmembrane segments (helical) span residues 94-114 (GPVT…MSLI), 142-162 (IFMH…WYLG), 169-189 (LGSG…GYVQ), 192-212 (FSGP…GYVW), 229-249 (LIIF…GMSM), and 250-270 (ANGA…VDTL). Ser-201 (nucleophile) is an active-site residue. The active site involves His-254.

It belongs to the peptidase S54 family.

The protein resides in the cell inner membrane. The catalysed reaction is Cleaves type-1 transmembrane domains using a catalytic dyad composed of serine and histidine that are contributed by different transmembrane domains.. In terms of biological role, rhomboid-type serine protease that catalyzes intramembrane proteolysis. In Salmonella agona (strain SL483), this protein is Rhomboid protease GlpG.